The chain runs to 335 residues: Dihydroorotate dehydrogenase (quinone) (335 aa).

Residues 59–63 and threonine 83 contribute to the FMN site; that span reads AGLDK. Lysine 63 contacts substrate. A substrate-binding site is contributed by 108 to 112; sequence NRMGF. FMN is bound by residues asparagine 136 and asparagine 169. Asparagine 169 contacts substrate. The Nucleophile role is filled by serine 172. Asparagine 174 provides a ligand contact to substrate. Positions 214 and 242 each coordinate FMN. Position 243-244 (243-244) interacts with substrate; the sequence is NT. Residues glycine 265, glycine 294, and 315 to 316 contribute to the FMN site; that span reads YS.

The protein belongs to the dihydroorotate dehydrogenase family. Type 2 subfamily. In terms of assembly, monomer. FMN serves as cofactor.

The protein localises to the cell membrane. It catalyses the reaction (S)-dihydroorotate + a quinone = orotate + a quinol. It functions in the pathway pyrimidine metabolism; UMP biosynthesis via de novo pathway; orotate from (S)-dihydroorotate (quinone route): step 1/1. In terms of biological role, catalyzes the conversion of dihydroorotate to orotate with quinone as electron acceptor. This chain is Dihydroorotate dehydrogenase (quinone), found in Neisseria meningitidis serogroup A / serotype 4A (strain DSM 15465 / Z2491).